The following is a 252-amino-acid chain: Triosephosphate isomerase (252 aa).

10-12 contacts substrate; the sequence is NWK. Catalysis depends on His96, which acts as the Electrophile. Catalysis depends on Glu168, which acts as the Proton acceptor. Substrate is bound by residues Gly174, Ser213, and 234–235; that span reads GG.

Belongs to the triosephosphate isomerase family. In terms of assembly, homodimer.

Its subcellular location is the cytoplasm. The catalysed reaction is D-glyceraldehyde 3-phosphate = dihydroxyacetone phosphate. The protein operates within carbohydrate biosynthesis; gluconeogenesis. It functions in the pathway carbohydrate degradation; glycolysis; D-glyceraldehyde 3-phosphate from glycerone phosphate: step 1/1. Its function is as follows. Involved in the gluconeogenesis. Catalyzes stereospecifically the conversion of dihydroxyacetone phosphate (DHAP) to D-glyceraldehyde-3-phosphate (G3P). The sequence is that of Triosephosphate isomerase from Nitrosomonas europaea (strain ATCC 19718 / CIP 103999 / KCTC 2705 / NBRC 14298).